The chain runs to 597 residues: Bromodomain-containing protein 9 (597 aa).

Basic residues predominate over residues 1–10 (MGKKHKKHKA). Disordered stretches follow at residues 1–25 (MGKK…KPLE) and 38–138 (EVTE…ENES). 2 stretches are compositionally biased toward basic and acidic residues: residues 11–25 (EWRS…KPLE) and 50–62 (SYYD…ERER). Position 56 is a phosphoserine (serine 56). The segment covering 63–73 (HKEKKKKKKKK) has biased composition (basic residues). Basic and acidic residues predominate over residues 74 to 85 (SEKEKHLDDEER). The span at 86 to 97 (RKRKEEKKRKRE) shows a compositional bias: basic residues. Residues 111-126 (DPGKKVEVEPPPDRPV) show a composition bias toward basic and acidic residues. A Bromo domain is found at 136–240 (NESTPIQQLL…HAGFKMMSKQ (105 aa)). Residues 214–216 (TYN) are histone H4K5ac H4K8ac and histone H4K5bu H4K8bu binding. Position 373 is an N6-acetyllysine; alternate (lysine 373). A Glycyl lysine isopeptide (Lys-Gly) (interchain with G-Cter in SUMO2); alternate cross-link involves residue lysine 373. Positions 536 to 597 (EAQAERGGSR…SPEPAASAKT (62 aa)) are disordered. A compositionally biased stretch (low complexity) spans 544–556 (SRPSSNLSSLSNA). Phosphoserine is present on residues serine 566 and serine 588.

Binds acetylated histones H3 and H4. Binds butyrylated histone H4. Component of the multiprotein chromatin-remodeling subcomplex SWI/SNF called GBAF, which includes at least BICRA or BICRAL (mutually exclusive), BRD9, SS18, the core BAF subunits, SMARCA2/BRM, SMARCA4/BRG1/BAF190A, ACTL6A/BAF53, SMARCC1/BAF155, and SMARCD1/BAF60A. Interacts (via N-terminal bromodomain) with acetylated RAD54. Interacts (via C-terminus) with RAD51.

It localises to the nucleus. In terms of biological role, plays a role in chromatin remodeling and regulation of transcription. Acts as a chromatin reader that recognizes and binds acylated histones: binds histones that are acetylated and/or butyrylated. Component of SWI/SNF chromatin remodeling subcomplex GBAF that carries out key enzymatic activities, changing chromatin structure by altering DNA-histone contacts within a nucleosome in an ATP-dependent manner. Also orchestrates the RAD51-RAD54 complex formation and thereby plays a role in homologous recombination (HR). This Homo sapiens (Human) protein is Bromodomain-containing protein 9 (BRD9).